The chain runs to 56 residues: Large ribosomal subunit protein bL33 (56 aa).

The segment covering methionine 1–leucine 12 has biased composition (basic and acidic residues). Residues methionine 1 to threonine 24 are disordered. Polar residues predominate over residues threonine 15 to threonine 24.

This sequence belongs to the bacterial ribosomal protein bL33 family.

The sequence is that of Large ribosomal subunit protein bL33 from Paracidovorax citrulli (strain AAC00-1) (Acidovorax citrulli).